Consider the following 434-residue polypeptide: UDP-N-acetylmuramoyl-L-alanyl-D-glutamate--2,6-diaminopimelate ligase (434 aa).

Ser17 provides a ligand contact to UDP-N-acetyl-alpha-D-muramoyl-L-alanyl-D-glutamate. Residue 68 to 74 (GTNGKTT) coordinates ATP. UDP-N-acetyl-alpha-D-muramoyl-L-alanyl-D-glutamate is bound by residues 111 to 112 (TT), Ser138, Gln144, and Arg146. At Lys178 the chain carries N6-carboxylysine. Meso-2,6-diaminopimelate-binding positions include Arg326, 350–353 (DNPR), Gly401, and Glu405. The Meso-diaminopimelate recognition motif signature appears at 350–353 (DNPR).

It belongs to the MurCDEF family. MurE subfamily. Mg(2+) is required as a cofactor. In terms of processing, carboxylation is probably crucial for Mg(2+) binding and, consequently, for the gamma-phosphate positioning of ATP.

Its subcellular location is the cytoplasm. The enzyme catalyses UDP-N-acetyl-alpha-D-muramoyl-L-alanyl-D-glutamate + meso-2,6-diaminopimelate + ATP = UDP-N-acetyl-alpha-D-muramoyl-L-alanyl-gamma-D-glutamyl-meso-2,6-diaminopimelate + ADP + phosphate + H(+). The protein operates within cell wall biogenesis; peptidoglycan biosynthesis. Its function is as follows. Catalyzes the addition of meso-diaminopimelic acid to the nucleotide precursor UDP-N-acetylmuramoyl-L-alanyl-D-glutamate (UMAG) in the biosynthesis of bacterial cell-wall peptidoglycan. The protein is UDP-N-acetylmuramoyl-L-alanyl-D-glutamate--2,6-diaminopimelate ligase of Wolinella succinogenes (strain ATCC 29543 / DSM 1740 / CCUG 13145 / JCM 31913 / LMG 7466 / NCTC 11488 / FDC 602W) (Vibrio succinogenes).